The primary structure comprises 348 residues: Selenide, water dikinase (348 aa).

U17 is an active-site residue. Residue U17 is a non-standard amino acid, selenocysteine. ATP-binding positions include K20 and 48–50 (TAD). D51 lines the Mg(2+) pocket. ATP-binding positions include D68, D91, and 138–140 (GHT). D91 serves as a coordination point for Mg(2+). Residue D226 participates in Mg(2+) binding.

Belongs to the selenophosphate synthase 1 family. Class I subfamily. As to quaternary structure, homodimer. Mg(2+) serves as cofactor.

The enzyme catalyses hydrogenselenide + ATP + H2O = selenophosphate + AMP + phosphate + 2 H(+). Its function is as follows. Synthesizes selenophosphate from selenide and ATP. The polypeptide is Selenide, water dikinase (Clostridioides difficile (strain 630) (Peptoclostridium difficile)).